Reading from the N-terminus, the 322-residue chain is Stage V sporulation protein K (322 aa).

99-106 (GNPGTGKT) serves as a coordination point for ATP.

It belongs to the CbxX/CfxQ family.

The protein is Stage V sporulation protein K (spoVK) of Bacillus subtilis (strain 168).